A 110-amino-acid chain; its full sequence is Hydrogenase maturation factor HypA (110 aa).

H2 contributes to the Ni(2+) binding site. 4 residues coordinate Zn(2+): C70, C73, C86, and C89.

This sequence belongs to the HypA/HybF family.

In terms of biological role, involved in the maturation of [NiFe] hydrogenases. Required for nickel insertion into the metal center of the hydrogenase. This chain is Hydrogenase maturation factor HypA, found in Geotalea daltonii (strain DSM 22248 / JCM 15807 / FRC-32) (Geobacter daltonii).